The chain runs to 1034 residues: Teashirt homolog 2 (1034 aa).

The segment at 1 to 90 (MPRRKQQAPK…NESLLSDASD (90 aa)) is disordered. Residues 13–38 (AGYAQEEQLKEEEEIKEEEEEEDSGS) adopt a coiled-coil conformation. The segment covering 21–36 (LKEEEEIKEEEEEEDS) has biased composition (acidic residues). Polar residues predominate over residues 65–90 (SYQNSPGSHLSNQDAENESLLSDASD). A Glycyl lysine isopeptide (Lys-Gly) (interchain with G-Cter in SUMO2) cross-link involves residue K188. 2 C2H2-type zinc fingers span residues 215 to 239 (FRCRQCSAAYDTLVELTVHMNETGH) and 275 to 299 (LKCMFCGDSFDSLQDLSVHMIKTKH). The disordered stretch occupies residues 239 to 265 (HYQDDNRKKDKLRPTSYSKPRKRAFQD). Glycyl lysine isopeptide (Lys-Gly) (interchain with G-Cter in SUMO2) cross-links involve residues K306 and K315. The C2H2-type 3; atypical zinc-finger motif lies at 380-404 (LKCMECGSSHDTLQQLTTHMMVTGH). Residue K417 forms a Glycyl lysine isopeptide (Lys-Gly) (interchain with G-Cter in SUMO2) linkage. Residues 432 to 455 (LSEAPNSDSLAPKPSSNSASDCTA) are compositionally biased toward polar residues. The tract at residues 432–496 (LSEAPNSDSL…PLQKPLDPTI (65 aa)) is disordered. Positions 459-482 (ELKKESKKERPEETSKDEKVVKSE) are enriched in basic and acidic residues. Glycyl lysine isopeptide (Lys-Gly) (interchain with G-Cter in SUMO2) cross-links involve residues K461, K480, K497, K601, and K652. Disordered regions lie at residues 598 to 676 (TQVK…TSAL) and 763 to 789 (QPIDLTKSKSKKAESSQAQSCMSPPQK). Residues 600–668 (VKKESEDKDE…KEGSEKEKPQ (69 aa)) show a composition bias toward basic and acidic residues. Residues K800 and K820 each participate in a glycyl lysine isopeptide (Lys-Gly) (interchain with G-Cter in SUMO2) cross-link. Residues 841–911 (RKGRQSNWNP…NVKYQLRKTG (71 aa)) constitute a DNA-binding region (homeobox; atypical). Residues 926–948 (FYCSDCASQFRTPSTYISHLESH) form a C2H2-type 4 zinc finger. K966 is covalently cross-linked (Glycyl lysine isopeptide (Lys-Gly) (interchain with G-Cter in SUMO2)). S980 is modified (phosphoserine). A C2H2-type 5 zinc finger spans residues 994–1017 (FKCKLCCRTFVSKHAVKLHLSKTH). Positions 1014–1034 (SKTHSKSPEHHSQFVTDVDEE) are disordered.

It belongs to the teashirt C2H2-type zinc-finger protein family. In terms of assembly, interacts (via homeobox domain) with APBB1 (via PID domain 1). In terms of processing, sumoylated. As to expression, expressed in brain; strongly reduced in post-mortem elderly subjects with Alzheimer disease.

Its subcellular location is the nucleus. Its function is as follows. Probable transcriptional regulator involved in developmental processes. May act as a transcriptional repressor (Potential). The protein is Teashirt homolog 2 (TSHZ2) of Homo sapiens (Human).